The primary structure comprises 337 residues: Methylthioribose-1-phosphate isomerase (337 aa).

Substrate contacts are provided by residues 47 to 49 (RGA), arginine 81, and glutamine 184. The active-site Proton donor is the aspartate 225. 235 to 236 (NK) provides a ligand contact to substrate.

It belongs to the eIF-2B alpha/beta/delta subunits family. MtnA subfamily.

It catalyses the reaction 5-(methylsulfanyl)-alpha-D-ribose 1-phosphate = 5-(methylsulfanyl)-D-ribulose 1-phosphate. It functions in the pathway amino-acid biosynthesis; L-methionine biosynthesis via salvage pathway; L-methionine from S-methyl-5-thio-alpha-D-ribose 1-phosphate: step 1/6. Its function is as follows. Catalyzes the interconversion of methylthioribose-1-phosphate (MTR-1-P) into methylthioribulose-1-phosphate (MTRu-1-P). This is Methylthioribose-1-phosphate isomerase from Synechococcus sp. (strain CC9605).